The chain runs to 397 residues: MAAPSPSGGGGSGGGGGTPGPIGPPASGHPAVSSMQGKRKALKLNFANPPVKSTARFTLNPNTTGVQNPHIERLRTHSIESSGKLKISPEQHWDFTAEDLKDLGEIGRGAYGSVNKMVHKPSGQIMAVKRIRSTVDEKEQKQLLMDLDVVMRSSDCPYIVQFYGALFREGDCWICMELMSTSFDKFYKYVYSVLDDVIPEEILGKITLATVKALNHLKENLKIIHRDIKPSNILLDRSGNIKLCDFGISGQLVDSIAKTRDAGCRPYMAPERIDPSASRQGYDVRSDVWSLGITLYELATGRFPYPKWNSVFDQLTQVVKGDPPQLSNSEEREFSPSFINFVNLCLTKDESKRPKYKELLKHPFILMYEERTVEVACYVCKILDQMPATPSSPMYVD.

The interval 1–38 (MAAPSPSGGGGSGGGGGTPGPIGPPASGHPAVSSMQGK) is disordered. At alanine 2 the chain carries N-acetylalanine. A compositionally biased stretch (gly residues) spans 7–20 (SGGGGSGGGGGTPG). The segment at 35-50 (MQGKRKALKLNFANPP) is d domain. Asymmetric dimethylarginine; alternate is present on arginine 56. Residue arginine 56 is modified to Omega-N-methylarginine; alternate. At serine 88 the chain carries Phosphoserine. A Protein kinase domain is found at 100-366 (LKDLGEIGRG…KELLKHPFIL (267 aa)). ATP contacts are provided by residues 106–114 (IGRGAYGSV) and lysine 129. Aspartate 227 serves as the catalytic Proton acceptor. Serine 255 carries the phosphoserine modification. Phosphothreonine is present on threonine 259. A DVD domain region spans residues 362-385 (HPFILMYEERTVEVACYVCKILDQ).

Belongs to the protein kinase superfamily. STE Ser/Thr protein kinase family. MAP kinase kinase subfamily. As to quaternary structure, interacts with SPAG9. Interacts (via its D domain) with its substrates MAPK8/JNK1, MAPK9/JNK2, MAPK10/JNK3, MAPK11 and MAPK14. Interacts (via its DVD domain) with MAP3Ks activators like MAP3K1/MEKK1 and MAP3K11/MLK3. Interacts with ARRB1, ARRB2 and MAPK8IP3/JIP3. Activated by phosphorylation on Ser-255 and Thr-259 by MAP kinase kinase kinases (MAP3Ks). Strong expression is detected in most of the central nervous system and in liver and thymus during early stages of development. While expression in nervous system increases over time, expression in fetal liver and thymus gradually decreases as embryogenesis proceeds. High level of expression in the central nervous system persists throughout postnatal development and remained at a stable level in adult brain.

The protein localises to the cytoplasm. It localises to the nucleus. The enzyme catalyses L-seryl-[protein] + ATP = O-phospho-L-seryl-[protein] + ADP + H(+). The catalysed reaction is L-threonyl-[protein] + ATP = O-phospho-L-threonyl-[protein] + ADP + H(+). It catalyses the reaction L-tyrosyl-[protein] + ATP = O-phospho-L-tyrosyl-[protein] + ADP + H(+). Activated in response to a variety of cellular stresses, including UV and gamma-irradiation, heat shock, hyperosmolarity, T-cell receptor stimulation, peroxide and inflammatory cytokines. Also activated by developmental cues. MAP2K4/MKK4 is activated by the majority of MKKKs, such as MAP3K5/ASK1, MAP3K1/MEKK1, MAP3K7/TAK1, MAP3K10/MLK2, MAP3K11/MLK3, MAP3K12/DLK and MAP3K13/LZK. Its function is as follows. Dual specificity protein kinase which acts as an essential component of the MAP kinase signal transduction pathway. Essential component of the stress-activated protein kinase/c-Jun N-terminal kinase (SAP/JNK) signaling pathway. With MAP2K7/MKK7, is the one of the only known kinase to directly activate the stress-activated protein kinase/c-Jun N-terminal kinases MAPK8/JNK1, MAPK9/JNK2 and MAPK10/JNK3. MAP2K4/MKK4 and MAP2K7/MKK7 both activate the JNKs by phosphorylation, but they differ in their preference for the phosphorylation site in the Thr-Pro-Tyr motif. MAP2K4 shows preference for phosphorylation of the Tyr residue and MAP2K7/MKK7 for the Thr residue. The phosphorylation of the Thr residue by MAP2K7/MKK7 seems to be the prerequisite for JNK activation at least in response to pro-inflammatory cytokines, while other stimuli activate both MAP2K4/MKK4 and MAP2K7/MKK7 which synergistically phosphorylate JNKs. MAP2K4 is required for maintaining peripheral lymphoid homeostasis. The MKK/JNK signaling pathway is also involved in mitochondrial death signaling pathway, including the release cytochrome c, leading to apoptosis. Whereas MAP2K7/MKK7 exclusively activates JNKs, MAP2K4/MKK4 additionally activates the p38 MAPKs MAPK11, MAPK12, MAPK13 and MAPK14. This chain is Dual specificity mitogen-activated protein kinase kinase 4 (Map2k4), found in Mus musculus (Mouse).